The following is a 708-amino-acid chain: Large T antigen (708 aa).

At methionine 1 the chain carries N-acetylmethionine; by host. In terms of domain architecture, J spans 12–75; sequence QLMDLLGLER…VKYAHQPDFG (64 aa). Residues 63-89 are binding of LT to the CUL7 complex; that stretch reads EDGVKYAHQPDFGGFWDATEIPTYGTD. The LXCXE motif signature appears at 103–107; that stretch reads LFCSE. Residues serine 106, serine 112, serine 120, and serine 123 each carry the phosphoserine; by host modification. Residues 109–134 form a disordered region; that stretch reads MPSSDDEATADSQHSTPPKKKRKVED. Position 124 is a phosphothreonine; by host (threonine 124). Positions 125-132 match the Nuclear localization signal motif; that stretch reads PPKKKRKV. The T-ag OBD DNA-binding region spans 139-254; it reads PSELLSFLSH…EESLPGGLKE (116 aa). A T-ag D1-type zinc finger spans residues 265 to 357; it reads TKQVSWKLVT…KRVDSLQLTR (93 aa). Zn(2+) is bound by residues cysteine 302, cysteine 305, histidine 313, and histidine 317. The segment at 337–672 is binding to host TP53 protein; that stretch reads CQQAVDTVLA…IDSQSQGSFQ (336 aa). The 161-residue stretch at 400-560 folds into the SF3 helicase domain; it reads KMDSVVYDFL…DYLKHCLERS (161 aa). The segment at 418-616 is ATPase activity; sequence KKRYWLFKGP…FSLSVYQKMK (199 aa). Residue 426–433 participates in ATP binding; sequence GPIDSGKT. The C-terminal region stretch occupies residues 627 to 708; it reads DWLRNSDDDD…PPTPPPEPET (82 aa). Positions 630-685 are disordered; sequence RNSDDDDEDSQENADKNEDGGEKNMEDSGHETGIDSQSQGSFQAPQSSQSVHDHNQ. Position 639 is a phosphoserine; by host (serine 639). The span at 642–662 shows a compositional bias: basic and acidic residues; the sequence is NADKNEDGGEKNMEDSGHETG. The span at 663-679 shows a compositional bias: polar residues; it reads IDSQSQGSFQAPQSSQS. A phosphoserine; by host mark is found at serine 676, serine 677, and serine 679. N6-acetyllysine; by host is present on lysine 697. Residues 699–708 form a CPD region; the sequence is PPTPPPEPET. Position 701 is a phosphothreonine; by host (threonine 701).

As to quaternary structure, isoform large T antigen forms homohexamers in the presence of ATP. Interacts with host HDAC1. Interacts (via LXCXE domain) with host RB1; the interaction induces the aberrant dissociation of RB1-E2F1 complex thereby disrupting RB1's activity. Interacts (via LXCXE domain) with host pRB-related proteins RBL1 and RBL2. Interacts (via C-terminus) with host TOP1 and POLA1 allowing DNA replication. Interacts with host TP53, inhibiting TP53 binding to DNA. Interacts with host preinitiation complex components TBP, TFIIA and TFIID to regulate transcription initiation. LT interacts (via CPD region) with host FBW7gamma isoform (via WD repeats); seems to function as a competitive inhibitor of FBW7gamma function for physiologic substrates. LT interacts with host E3 ubiquitin ligase CUL7; this interaction seems to inhibit CUL7. Component of a SCF(CUL7)-like complex composed of SV40 Lt and host proteins CUL7, SKP1, RBX1, and FBXW8. LT interacts with host BUB1; this interaction induces activation of a DNA damage response and promotes p53 stabilization and phosphorylation. Interacts with host FAM111A and this interaction is required for efficient viral replication and sustained viral gene expression in restrictive cell types. Mg(2+) serves as cofactor. Phosphorylated on both serine and threonine residues. Phosphorylation on Ser-120 and Ser-123 inhibits viral replication, while phosphorylation on Thr-124 enhances replication by activating the DNA-binding domain. Phosphorylation on Thr-701 is required for binding to host FBW7gamma isoform. Dephosphorylated preferentially by PP2A on Ser-120, Ser-123, Ser-677 and perhaps Ser-679. Small t antigen inhibits the dephosphorylation by the AC form of PP2A. In terms of processing, O-Glycosylated near the C-terminal region. Post-translationally, acetylated by CBP in a TP53-dependent manner.

The protein resides in the host nucleus. It catalyses the reaction Couples ATP hydrolysis with the unwinding of duplex DNA by translocating in the 3'-5' direction.. The enzyme catalyses ATP + H2O = ADP + phosphate + H(+). With respect to regulation, DNA helicase activity is inhibited by ATP-gamma-S. In terms of biological role, isoform large T antigen is a key early protein essential for both driving viral replication and inducing cellular transformation. Plays a role in viral genome replication by driving entry of quiescent cells into the cell cycle and by autoregulating the synthesis of viral early mRNA. Displays highly oncogenic activities by corrupting the host cellular checkpoint mechanisms that guard cell division and the transcription, replication, and repair of DNA. Participates in the modulation of cellular gene expression preceeding viral DNA replication. This step involves binding to host key cell cycle regulators retinoblastoma protein RB1/pRb and TP53. Induces the disassembly of host E2F1 transcription factors from RB1, thus promoting transcriptional activation of E2F1-regulated S-phase genes. Inhibits host TP53 binding to DNA, abrogating the ability of TP53 to stimulate gene expression. Plays the role of a TFIID-associated factor (TAF) in transcription initiation for all three RNA polymerases, by stabilizing the TBP-TFIIA complex on promoters. Initiates viral DNA replication and unwinding via interactions with the viral origin of replication. Binds two adjacent sites in the SV40 origin. The replication fork movement is facilitated by Large T antigen helicase activity. Has processive 3'-5' DNA helicase activity which requires a short 3' single-stranded region and ATP; other (d)NTPs can partially replace ATP. Activates the transcription of viral late mRNA, through host TBP and TFIIA stabilization. Interferes with histone deacetylation mediated by HDAC1, leading to activation of transcription. May inactivate the growth-suppressing properties of the E3 ubiquitin ligase CUL7. Isoform 17kT antigen targets host RBL2 for degradation and promotes cell proliferation. Transactivates host cyclin A promoter through its J domain. Functionally, unwinds G4 DNA (planar arrays of 4 guanine bases stabilized by hydrogen bonds, parallel and antiparallel arrays were tested); unwinding occurs in the 3'-5' direction, requires a 3' single-stranded end and hydrolyzable ATP. The polypeptide is Large T antigen (Macaca (macaques)).